We begin with the raw amino-acid sequence, 76 residues long: Small ribosomal subunit protein bS18 (76 aa).

It belongs to the bacterial ribosomal protein bS18 family. Part of the 30S ribosomal subunit. Forms a tight heterodimer with protein bS6.

Functionally, binds as a heterodimer with protein bS6 to the central domain of the 16S rRNA, where it helps stabilize the platform of the 30S subunit. The sequence is that of Small ribosomal subunit protein bS18 from Symbiobacterium thermophilum (strain DSM 24528 / JCM 14929 / IAM 14863 / T).